The sequence spans 463 residues: Succinate--CoA ligase [ADP-forming] subunit beta, mitochondrial (463 aa).

The transit peptide at 1–52 directs the protein to the mitochondrion; sequence MAASMFYGRLVAVATLRNHRPRTAQRAAAQVLGSSGLFNNHGLQVQQQQQRN. One can recognise an ATP-grasp domain in the interval 61 to 288; it reads MELLQEAGVS…SNSAYRQKKI (228 aa). Lys78 is subject to N6-acetyllysine. Residue Tyr84 is modified to Phosphotyrosine. An N6-acetyllysine; alternate modification is found at Lys88. Residue Lys88 is modified to N6-succinyllysine; alternate. ATP contacts are provided by residues Lys98 and 105-107; that span reads GRG. N6-acetyllysine occurs at positions 129, 139, 143, and 216. Mg(2+) contacts are provided by Asn258 and Asp272. Ser279 bears the Phosphoserine mark. Asn323 serves as a coordination point for substrate. Thr341 is modified (phosphothreonine). Lys368 carries the post-translational modification N6-acetyllysine. 380–382 is a binding site for substrate; sequence GIM.

The protein belongs to the succinate/malate CoA ligase beta subunit family. ATP-specific subunit beta subfamily. In terms of assembly, heterodimer of an alpha and a beta subunit. The beta subunit determines specificity for ATP. Interacts with ALAS2. Mg(2+) is required as a cofactor. As to expression, widely expressed. Not expressed in liver and lung.

The protein resides in the mitochondrion. The catalysed reaction is succinate + ATP + CoA = succinyl-CoA + ADP + phosphate. The protein operates within carbohydrate metabolism; tricarboxylic acid cycle; succinate from succinyl-CoA (ligase route): step 1/1. Inhibited by itaconate. Its function is as follows. ATP-specific succinyl-CoA synthetase functions in the citric acid cycle (TCA), coupling the hydrolysis of succinyl-CoA to the synthesis of ATP and thus represents the only step of substrate-level phosphorylation in the TCA. The beta subunit provides nucleotide specificity of the enzyme and binds the substrate succinate, while the binding sites for coenzyme A and phosphate are found in the alpha subunit. The sequence is that of Succinate--CoA ligase [ADP-forming] subunit beta, mitochondrial from Homo sapiens (Human).